Consider the following 400-residue polypeptide: Glycerol-3-phosphate dehydrogenase [NAD(+)] 1, chloroplastic (400 aa).

Residues 1–32 (MRFRSFFFSSSIFSLSHSRSPSLSSSRFSSLS) constitute a chloroplast transit peptide. Residues 61–66 (GSGNWG), Phe92, Phe149, Lys172, and Ala205 contribute to the NAD(+) site. Lys172 lines the substrate pocket. Lys257 (proton acceptor) is an active-site residue. Residues Arg321, Lys350, and Gln352 each contribute to the NAD(+) site. 321–322 (RN) serves as a coordination point for substrate.

Belongs to the NAD-dependent glycerol-3-phosphate dehydrogenase family. In terms of tissue distribution, expressed in young seedlings, flowers and siliques. Expressed at low levels in roots.

Its subcellular location is the plastid. The protein localises to the chloroplast. It catalyses the reaction sn-glycerol 3-phosphate + NAD(+) = dihydroxyacetone phosphate + NADH + H(+). Its pathway is membrane lipid metabolism; glycerophospholipid metabolism. Involved in glycerolipid metabolism. This is Glycerol-3-phosphate dehydrogenase [NAD(+)] 1, chloroplastic (DHAPRD) from Arabidopsis thaliana (Mouse-ear cress).